Reading from the N-terminus, the 504-residue chain is Cytochrome P450 monooxygenase gliF (504 aa).

A helical membrane pass occupies residues 13–31 (AVAVSFGVGLLYWVYRLLL). N-linked (GlcNAc...) asparagine glycosylation is found at N197 and N299. C449 serves as a coordination point for heme.

Belongs to the cytochrome P450 family. Heme is required as a cofactor.

The protein resides in the membrane. The protein operates within mycotoxin biosynthesis. Cytochrome P450 monooxygenase; part of the gene cluster that mediates the biosynthesis of gliotoxin, a member of the epipolythiodioxopiperazine (ETP) class of toxins characterized by a disulfide bridged cyclic dipeptide. The first step in gliotoxin biosynthesis is the condensation of serine and phenylalanine to form the cyclo-L-phenylalanyl-L-serine diketopiperazine (DKP) by the NRPS gliP. GliP is also able to produce the DKP cyclo-L-tryptophanyl-L-serine, suggesting that the substrate specificity of the first adenylation (A) domain in gliP is sufficiently relaxed to accommodate both L-Phe and L-Trp. The cytochrome P450 monooxygenase gliC has been shown to catalyze the subsequent hydroxylation of the alpha-carbon of L-Phe in cyclo-L-phenylalanyl-L-serine whereas the second cytochrome P450 enzyme, gliF, is presumably involved in the modification of the DKP side chain. The glutathione S-transferase (GST) gliG then forms a bis-glutathionylated biosynthetic intermediate which is responsible for the sulfurization of gliotoxin. This bis-glutathionylated intermediate is subsequently processed by the gamma-glutamyl cyclotransferase gliK to remove both gamma-glutamyl moieties. Subsequent processing via gliI yields a biosynthetic intermediate, which is N-methylated via the N-methyltransferase gliN, before the gliotoxin oxidoreductase gliT-mediated disulfide bridge closure. GliN-mediated amide methylation confers stability to ETP, damping the spontaneous formation of tri- and tetrasulfides. Intracellular dithiol gliotoxin oxidized by gliT is subsequently effluxed by gliA. Gliotoxin contributes to pathogenesis during invasive aspergillosis. In macrophages and neutrophils, gliotoxin showed inhibition of various different cell functions including cytokine production, antigen presentation, phagocytosis, and production of reactive oxygen species. The polypeptide is Cytochrome P450 monooxygenase gliF (Aspergillus fumigatus (strain ATCC MYA-4609 / CBS 101355 / FGSC A1100 / Af293) (Neosartorya fumigata)).